We begin with the raw amino-acid sequence, 645 residues long: 1-phosphatidylinositol 4,5-bisphosphate phosphodiesterase zeta-1 (645 aa).

The EF-hand domain maps to 42–77 (CHFAHVKRIFKENDRHNQGRITTEDFRTIYRCIVHR). One can recognise a PI-PLC X-box domain in the interval 162–306 (QDMNKPLNDY…LKFKILVKNK (145 aa)). Residues H177 and H222 contribute to the active site. The PI-PLC Y-box domain occupies 385 to 501 (LSDLVIYTKA…GYVLKPDFLR (117 aa)). Residues 501 to 625 (RDTTLGFNPN…KGYRRVPLFS (125 aa)) enclose the C2 domain.

As to quaternary structure, interacts via its C2 domain with PtdIns(3)P and, to a lesser extent, PtdIns(5)P in vitro. Ca(2+) serves as cofactor.

It is found in the nucleus. It localises to the cytoplasm. The protein localises to the perinuclear region. The catalysed reaction is a 1,2-diacyl-sn-glycero-3-phospho-(1D-myo-inositol-4,5-bisphosphate) + H2O = 1D-myo-inositol 1,4,5-trisphosphate + a 1,2-diacyl-sn-glycerol + H(+). In terms of biological role, the production of the second messenger molecules diacylglycerol (DAG) and inositol 1,4,5-trisphosphate (IP3) is mediated by activated phosphatidylinositol-specific phospholipase C enzymes. In vitro, hydrolyzes PtdIns(4,5)P2 in a Ca(2+)-dependent manner. Triggers intracellular Ca(2+) oscillations in oocytes solely during M phase and is involved in inducing oocyte activation and initiating embryonic development up to the blastocyst stage. Is therefore a strong candidate for the egg-activating soluble sperm factor that is transferred from the sperm into the egg cytoplasm following gamete membrane fusion. May exert an inhibitory effect on phospholipase-C-coupled processes that depend on calcium ions and protein kinase C, including CFTR trafficking and function. This is 1-phosphatidylinositol 4,5-bisphosphate phosphodiesterase zeta-1 from Rattus norvegicus (Rat).